The primary structure comprises 404 residues: NADH-quinone oxidoreductase subunit D 1 (404 aa).

This sequence belongs to the complex I 49 kDa subunit family. As to quaternary structure, NDH-1 is composed of 14 different subunits. Subunits NuoB, C, D, E, F, and G constitute the peripheral sector of the complex.

It is found in the cell membrane. The enzyme catalyses a quinone + NADH + 5 H(+)(in) = a quinol + NAD(+) + 4 H(+)(out). Its function is as follows. NDH-1 shuttles electrons from NADH, via FMN and iron-sulfur (Fe-S) centers, to quinones in the respiratory chain. The immediate electron acceptor for the enzyme in this species is believed to be a menaquinone. Couples the redox reaction to proton translocation (for every two electrons transferred, four hydrogen ions are translocated across the cytoplasmic membrane), and thus conserves the redox energy in a proton gradient. This chain is NADH-quinone oxidoreductase subunit D 1, found in Symbiobacterium thermophilum (strain DSM 24528 / JCM 14929 / IAM 14863 / T).